A 91-amino-acid chain; its full sequence is Large ribosomal subunit protein eL34 (91 aa).

It belongs to the eukaryotic ribosomal protein eL34 family.

This is Large ribosomal subunit protein eL34 from Thermofilum pendens (strain DSM 2475 / Hrk 5).